The sequence spans 364 residues: 4-hydroxy-3-methylbut-2-en-1-yl diphosphate synthase (flavodoxin) (364 aa).

[4Fe-4S] cluster-binding residues include C268, C271, C303, and E310.

It belongs to the IspG family. Requires [4Fe-4S] cluster as cofactor.

The enzyme catalyses (2E)-4-hydroxy-3-methylbut-2-enyl diphosphate + oxidized [flavodoxin] + H2O + 2 H(+) = 2-C-methyl-D-erythritol 2,4-cyclic diphosphate + reduced [flavodoxin]. It participates in isoprenoid biosynthesis; isopentenyl diphosphate biosynthesis via DXP pathway; isopentenyl diphosphate from 1-deoxy-D-xylulose 5-phosphate: step 5/6. In terms of biological role, converts 2C-methyl-D-erythritol 2,4-cyclodiphosphate (ME-2,4cPP) into 1-hydroxy-2-methyl-2-(E)-butenyl 4-diphosphate. The protein is 4-hydroxy-3-methylbut-2-en-1-yl diphosphate synthase (flavodoxin) of Anoxybacillus flavithermus (strain DSM 21510 / WK1).